The primary structure comprises 838 residues: Serine/threonine-protein phosphatase 4 regulatory subunit 3 (838 aa).

2 disordered regions span residues 452 to 482 and 745 to 838; these read NNCN…SPSR and AINK…SESS. Positions 747-761 are enriched in polar residues; the sequence is NKQQDNNGERNTTTG. The segment covering 783 to 792 has biased composition (acidic residues); that stretch reads SDGENNENNE.

Regulatory subunit 3 (R3) of the histone H2A phosphatase complex (HTP-C) consisting of PPH3, PSY2 and PSY4.

It is found in the nucleus. Its function is as follows. Core regulatory subunit of the histone H2A phosphatase complex, which dephosphorylates H2AS128ph (gamma-H2A) that has been displaced from sites of DNA lesions in the double-stranded DNA break repair process. Dephosphorylation is necessary for efficient recovery from the DNA damage checkpoint. The polypeptide is Serine/threonine-protein phosphatase 4 regulatory subunit 3 (PSY2) (Eremothecium gossypii (strain ATCC 10895 / CBS 109.51 / FGSC 9923 / NRRL Y-1056) (Yeast)).